The primary structure comprises 670 residues: DNA ligase (670 aa).

Residues 36-40 (DEEYD), 84-85 (SL), and E116 contribute to the NAD(+) site. The N6-AMP-lysine intermediate role is filled by K118. R139, E177, K293, and K317 together coordinate NAD(+). 4 residues coordinate Zn(2+): C411, C414, C429, and C434. One can recognise a BRCT domain in the interval 594–670 (KKPSPLKGLT…SYEEFLKMLE (77 aa)).

It belongs to the NAD-dependent DNA ligase family. LigA subfamily. Requires Mg(2+) as cofactor. The cofactor is Mn(2+).

It catalyses the reaction NAD(+) + (deoxyribonucleotide)n-3'-hydroxyl + 5'-phospho-(deoxyribonucleotide)m = (deoxyribonucleotide)n+m + AMP + beta-nicotinamide D-nucleotide.. Its function is as follows. DNA ligase that catalyzes the formation of phosphodiester linkages between 5'-phosphoryl and 3'-hydroxyl groups in double-stranded DNA using NAD as a coenzyme and as the energy source for the reaction. It is essential for DNA replication and repair of damaged DNA. This Thermodesulfovibrio yellowstonii (strain ATCC 51303 / DSM 11347 / YP87) protein is DNA ligase.